The chain runs to 395 residues: Dihydroorotate dehydrogenase (quinone), mitochondrial (395 aa).

The transit peptide at 1–10 (MAWRHLKKRA) directs the protein to the mitochondrion; not cleaved. The Mitochondrial matrix segment spans residues 1–10 (MAWRHLKKRA). Residues 11–30 (QDAVIILGGGGLLFASYLMA) traverse the membrane as a helical segment. Topologically, residues 31-395 (TGDERFYAEH…TDAIGADHRR (365 aa)) are mitochondrial intermembrane. FMN-binding positions include 95–99 (AGFDK) and serine 119. Lysine 99 is a binding site for substrate. 144 to 148 (NRYGF) provides a ligand contact to substrate. FMN contacts are provided by asparagine 180 and asparagine 211. 211–216 (NVSSPN) is a binding site for substrate. The Nucleophile role is filled by serine 214. Positions 254 and 282 each coordinate FMN. 283-284 (NT) contacts substrate. Residues glycine 305, glycine 334, and 355–356 (YT) contribute to the FMN site.

The protein belongs to the dihydroorotate dehydrogenase family. Type 2 subfamily. As to quaternary structure, monomer. Requires FMN as cofactor. Post-translationally, the uncleaved transit peptide is required for mitochondrial targeting and proper membrane integration.

It localises to the mitochondrion inner membrane. It carries out the reaction (S)-dihydroorotate + a quinone = orotate + a quinol. It functions in the pathway pyrimidine metabolism; UMP biosynthesis via de novo pathway; orotate from (S)-dihydroorotate (quinone route): step 1/1. Its function is as follows. Catalyzes the conversion of dihydroorotate to orotate with quinone as electron acceptor. Required for UMP biosynthesis via de novo pathway. This is Dihydroorotate dehydrogenase (quinone), mitochondrial (DHODH) from Homo sapiens (Human).